A 103-amino-acid chain; its full sequence is Large ribosomal subunit protein bL21 (103 aa).

It belongs to the bacterial ribosomal protein bL21 family. In terms of assembly, part of the 50S ribosomal subunit. Contacts protein L20.

Functionally, this protein binds to 23S rRNA in the presence of protein L20. In Delftia acidovorans (strain DSM 14801 / SPH-1), this protein is Large ribosomal subunit protein bL21.